A 100-amino-acid polypeptide reads, in one-letter code: RxLR effector protein PITG_18683 (100 aa).

Positions 1-22 (MRSFLYGILAFAVLARSSAVAA) are cleaved as a signal peptide. A RxLR-dEER motif is present at residues 43–57 (RSLRVEAQEVIQSGR). The Calmodulin-binding motif signature appears at 78–82 (KPDIK).

The protein belongs to the RxLR effector family. As to quaternary structure, interacts with the host calmodulin.

It localises to the secreted. The protein resides in the host cell. Functionally, secreted effector that associates with calmodulin to interfere with plant defense-associated calcium signaling in hosts. The chain is RxLR effector protein PITG_18683 from Phytophthora infestans (strain T30-4) (Potato late blight agent).